Consider the following 92-residue polypeptide: MARTVNCVYLNKEADGLDFQLYPGDLGKRIFDNVSKEAWGLWQKKQTMLINEKKLNMMNVDDRKFLEEQMTSFLFEGKDVEIEGFVPEKGQE.

Belongs to the Fe(2+)-trafficking protein family.

Could be a mediator in iron transactions between iron acquisition and iron-requiring processes, such as synthesis and/or repair of Fe-S clusters in biosynthetic enzymes. The sequence is that of Probable Fe(2+)-trafficking protein from Shewanella sp. (strain ANA-3).